Here is a 231-residue protein sequence, read N- to C-terminus: ATP-dependent dethiobiotin synthetase BioD 2 (231 aa).

Position 13–18 (13–18 (SVGKTV)) interacts with ATP. Thr-17 contributes to the Mg(2+) binding site. Lys-38 is an active-site residue. ATP is bound by residues Asp-55, 112–115 (EGTG), 172–173 (NR), 201–203 (PYL), and Gln-208. The Mg(2+) site is built by Asp-55 and Glu-112.

Belongs to the dethiobiotin synthetase family. Homodimer. Mg(2+) serves as cofactor.

Its subcellular location is the cytoplasm. The enzyme catalyses (7R,8S)-7,8-diammoniononanoate + CO2 + ATP = (4R,5S)-dethiobiotin + ADP + phosphate + 3 H(+). The protein operates within cofactor biosynthesis; biotin biosynthesis; biotin from 7,8-diaminononanoate: step 1/2. Its function is as follows. Catalyzes a mechanistically unusual reaction, the ATP-dependent insertion of CO2 between the N7 and N8 nitrogen atoms of 7,8-diaminopelargonic acid (DAPA, also called 7,8-diammoniononanoate) to form a ureido ring. The chain is ATP-dependent dethiobiotin synthetase BioD 2 from Escherichia coli O157:H7.